A 134-amino-acid chain; its full sequence is Small ribosomal subunit protein uS8 (134 aa).

This sequence belongs to the universal ribosomal protein uS8 family. Part of the 30S ribosomal subunit. Contacts proteins S5 and S12.

Its function is as follows. One of the primary rRNA binding proteins, it binds directly to 16S rRNA central domain where it helps coordinate assembly of the platform of the 30S subunit. In Synechococcus sp. (strain JA-3-3Ab) (Cyanobacteria bacterium Yellowstone A-Prime), this protein is Small ribosomal subunit protein uS8.